We begin with the raw amino-acid sequence, 185 residues long: Ribosome-recycling factor (185 aa).

This sequence belongs to the RRF family.

The protein resides in the cytoplasm. In terms of biological role, responsible for the release of ribosomes from messenger RNA at the termination of protein biosynthesis. May increase the efficiency of translation by recycling ribosomes from one round of translation to another. In Thermus thermophilus (strain ATCC BAA-163 / DSM 7039 / HB27), this protein is Ribosome-recycling factor.